The primary structure comprises 265 residues: H-2 class II histocompatibility antigen, A beta chain (265 aa).

The N-terminal stretch at 1–27 is a signal peptide; sequence MALQIPSLLLSAAVVVLMVLSSPGTEG. The tract at residues 28-122 is beta-1; sequence GDSERHFVYQ…PETHTSLRRL (95 aa). Residues 28–226 are Extracellular-facing; it reads GDSERHFVYQ…RAQSESAWSK (199 aa). Intrachain disulfides connect Cys-42/Cys-106 and Cys-145/Cys-201. The N-linked (GlcNAc...) asparagine glycan is linked to Asn-46. The tract at residues 123 to 216 is beta-2; that stretch reads EQPNVVISLS…SLKSPITVEW (94 aa). The Ig-like C1-type domain maps to 125-213; it reads PNVVISLSRT…EHPSLKSPIT (89 aa). The interval 217–226 is connecting peptide; sequence RAQSESAWSK. The helical transmembrane segment at 227–247 threads the bilayer; the sequence is MLSGIGGCVLGVIFLGLGLFI. Topologically, residues 248 to 265 are cytoplasmic; the sequence is RHRSQKGPRGPPPAGLLQ.

The protein belongs to the MHC class II family. Ubiquitinated in immature dendritic cells leading to down-regulation of MHC class II.

Its subcellular location is the membrane. The protein is H-2 class II histocompatibility antigen, A beta chain (H2-Ab1) of Mus musculus (Mouse).